The chain runs to 236 residues: Uridylate kinase (236 aa).

An ATP-binding site is contributed by 8-11 (KLSG). G51 is a UMP binding site. 2 residues coordinate ATP: G52 and R56. UMP contacts are provided by residues D71 and 133 to 140 (TGRPFFTT). N161, F167, and D170 together coordinate ATP.

Belongs to the UMP kinase family. In terms of assembly, homohexamer.

The protein resides in the cytoplasm. The catalysed reaction is UMP + ATP = UDP + ADP. It functions in the pathway pyrimidine metabolism; CTP biosynthesis via de novo pathway; UDP from UMP (UMPK route): step 1/1. Inhibited by UTP. Its function is as follows. Catalyzes the reversible phosphorylation of UMP to UDP. In Mesomycoplasma hyopneumoniae (strain 232) (Mycoplasma hyopneumoniae), this protein is Uridylate kinase.